The following is a 185-amino-acid chain: uncharacterized protein (185 aa).

To M.thermoautotrophicum MTH236.

This is an uncharacterized protein from Methanocaldococcus jannaschii (strain ATCC 43067 / DSM 2661 / JAL-1 / JCM 10045 / NBRC 100440) (Methanococcus jannaschii).